A 274-amino-acid chain; its full sequence is Large ribosomal subunit protein uL2 (274 aa).

A disordered region spans residues 224 to 274 (AMNPVDHPHGGGEGRTGEGQVPVSPWNTMTKGYRTRSNKRTQTFIVSRRKK). The span at 229–239 (DHPHGGGEGRT) shows a compositional bias: basic and acidic residues.

This sequence belongs to the universal ribosomal protein uL2 family. In terms of assembly, part of the 50S ribosomal subunit. Forms a bridge to the 30S subunit in the 70S ribosome.

In terms of biological role, one of the primary rRNA binding proteins. Required for association of the 30S and 50S subunits to form the 70S ribosome, for tRNA binding and peptide bond formation. It has been suggested to have peptidyltransferase activity; this is somewhat controversial. Makes several contacts with the 16S rRNA in the 70S ribosome. The sequence is that of Large ribosomal subunit protein uL2 from Methylibium petroleiphilum (strain ATCC BAA-1232 / LMG 22953 / PM1).